A 440-amino-acid polypeptide reads, in one-letter code: Thymidine phosphorylase (440 aa).

It belongs to the thymidine/pyrimidine-nucleoside phosphorylase family. Homodimer.

The enzyme catalyses thymidine + phosphate = 2-deoxy-alpha-D-ribose 1-phosphate + thymine. It participates in pyrimidine metabolism; dTMP biosynthesis via salvage pathway; dTMP from thymine: step 1/2. Functionally, the enzymes which catalyze the reversible phosphorolysis of pyrimidine nucleosides are involved in the degradation of these compounds and in their utilization as carbon and energy sources, or in the rescue of pyrimidine bases for nucleotide synthesis. This is Thymidine phosphorylase from Salmonella schwarzengrund (strain CVM19633).